A 116-amino-acid chain; its full sequence is Tyrosine-protein phosphatase 10 (116 aa).

Residues 1–116 (WRMVWEQNVS…SPTGYGPIVV (116 aa)) form the Tyrosine-protein phosphatase domain. Asp86 contributes to the substrate binding site.

Belongs to the protein-tyrosine phosphatase family.

It catalyses the reaction O-phospho-L-tyrosyl-[protein] + H2O = L-tyrosyl-[protein] + phosphate. The protein is Tyrosine-protein phosphatase 10 (STY-10) of Styela plicata (Wrinkled sea squirt).